A 3131-amino-acid chain; its full sequence is Enniatin synthase (3131 aa).

The interval 53-466 (ADDKQRAVGH…VEKVDMMTQE (414 aa)) is condensation 1. Positions 186-212 (NDEHPRQFETPDSSQATPEEDLQPNPS) are disordered. Residues 495–887 (SQSPNKAAVA…GRMDSQVKIR (393 aa)) are adenylation 1. Residues 1010–1086 (SSGTDTYTKL…GLKAIVIGTS (77 aa)) form the Carrier 1 domain. Residue Ser1047 is modified to O-(pantetheine 4'-phosphoryl)serine. Positions 1105 to 1534 (SYAQNRMWFL…ETCISVLPLT (430 aa)) are condensation 2. Residues 1563–1960 (FREQAAANPE…GRMDNQFKIR (398 aa)) are adenylation 2. The interval 2021-2177 (EGWQDHFESG…YLAEVIDGLI (157 aa)) is S-adenosyl-L-methionine-dependent N-methyltransferase. 2 Carrier domains span residues 2504 to 2578 (FPIS…RQGL) and 2598 to 2671 (APRT…ESSH). Ser2538 and Ser2632 each carry O-(pantetheine 4'-phosphoryl)serine. The interval 2718–3123 (QDVYPSTQMQ…RHVLEEVCKT (406 aa)) is condensation 3.

It belongs to the ATP-dependent AMP-binding enzyme family. Pantetheine 4'-phosphate serves as cofactor. Post-translationally, the N-terminus is blocked.

Its pathway is antibiotic biosynthesis; enniatin biosynthesis. With respect to regulation, the N-methylation activity is inhibited by S-adenosyl-L-homocysteine and sinefugin. Functionally, nonribosomal peptide synthetase that synthesizes enniatin by coupling three D-hydroxycarboxylic acids and three L-amino acids via amide and ester bonds in an alternating fashion. Whereas ESYN1 can accept different amino acids as precursors (L -valine, L-isoleucine or L-leucine), only one species of D-hydroxycarboxylic acid can be found in natural enniatin isolates (D-hydroxyisovaleric acid, D-Hiv). D-Hiv stems from L-valine deanimation by a valine aminotransferase to 2-keto-isovaleric acid (2-Kiv), which becomes subsequently reduced by a keto-isovaleric acid reductase (KivR) to D-Hiv. Peptide bond formation and N-methylation of the amino acid occur before three enzyme-bound dipeptidols are condensed to a hexapeptidol. In Fusarium equiseti (Fusarium scirpi), this protein is Enniatin synthase.